The primary structure comprises 380 residues: Chaperone protein DnaJ (380 aa).

The 65-residue stretch at Asp-5–Gly-69 folds into the J domain. A CR-type zinc finger spans residues Gly-140 to Ser-222. Residues Cys-153, Cys-156, Cys-170, Cys-173, Cys-196, Cys-199, Cys-210, and Cys-213 each contribute to the Zn(2+) site. CXXCXGXG motif repeat units lie at residues Cys-153–Gly-160, Cys-170–Gly-177, Cys-196–Gly-203, and Cys-210–Gly-217.

It belongs to the DnaJ family. Homodimer. It depends on Zn(2+) as a cofactor.

The protein resides in the cytoplasm. In terms of biological role, participates actively in the response to hyperosmotic and heat shock by preventing the aggregation of stress-denatured proteins and by disaggregating proteins, also in an autonomous, DnaK-independent fashion. Unfolded proteins bind initially to DnaJ; upon interaction with the DnaJ-bound protein, DnaK hydrolyzes its bound ATP, resulting in the formation of a stable complex. GrpE releases ADP from DnaK; ATP binding to DnaK triggers the release of the substrate protein, thus completing the reaction cycle. Several rounds of ATP-dependent interactions between DnaJ, DnaK and GrpE are required for fully efficient folding. Also involved, together with DnaK and GrpE, in the DNA replication of plasmids through activation of initiation proteins. This is Chaperone protein DnaJ from Lactiplantibacillus plantarum (strain ATCC BAA-793 / NCIMB 8826 / WCFS1) (Lactobacillus plantarum).